The chain runs to 305 residues: Ornithine carbamoyltransferase (305 aa).

Residues S52–T55, Q79, R103, and H130–Q133 contribute to the carbamoyl phosphate site. Residues N162, D224, and S228–M229 contribute to the L-ornithine site. Residues C264–L265 and R292 contribute to the carbamoyl phosphate site.

It belongs to the aspartate/ornithine carbamoyltransferase superfamily. OTCase family.

The protein resides in the cytoplasm. The enzyme catalyses carbamoyl phosphate + L-ornithine = L-citrulline + phosphate + H(+). Its pathway is amino-acid biosynthesis; L-arginine biosynthesis; L-arginine from L-ornithine and carbamoyl phosphate: step 1/3. Its function is as follows. Reversibly catalyzes the transfer of the carbamoyl group from carbamoyl phosphate (CP) to the N(epsilon) atom of ornithine (ORN) to produce L-citrulline. In Pyrobaculum aerophilum (strain ATCC 51768 / DSM 7523 / JCM 9630 / CIP 104966 / NBRC 100827 / IM2), this protein is Ornithine carbamoyltransferase.